The sequence spans 580 residues: Xylulose kinase (580 aa).

4 residues coordinate substrate: H99, R170, D280, and N281. Residues W355, G441 to A442, and N445 contribute to the ATP site.

Belongs to the FGGY kinase family. Monomer.

The catalysed reaction is D-xylulose + ATP = D-xylulose 5-phosphate + ADP + H(+). Functionally, phosphorylates D-xylulose to produce D-xylulose 5-phosphate, a molecule that may play an important role in the regulation of glucose metabolism and lipogenesis. The chain is Xylulose kinase (XYLB) from Pongo abelii (Sumatran orangutan).